Reading from the N-terminus, the 424-residue chain is Serine--tRNA ligase (424 aa).

233–235 is an L-serine binding site; it reads TAE. Residue 264-266 coordinates ATP; sequence RRE. Glu-287 lines the L-serine pocket. Residue 351-354 participates in ATP binding; the sequence is EISS. Ser-386 is an L-serine binding site.

This sequence belongs to the class-II aminoacyl-tRNA synthetase family. Type-1 seryl-tRNA synthetase subfamily. In terms of assembly, homodimer. The tRNA molecule binds across the dimer.

The protein localises to the cytoplasm. The catalysed reaction is tRNA(Ser) + L-serine + ATP = L-seryl-tRNA(Ser) + AMP + diphosphate + H(+). The enzyme catalyses tRNA(Sec) + L-serine + ATP = L-seryl-tRNA(Sec) + AMP + diphosphate + H(+). The protein operates within aminoacyl-tRNA biosynthesis; selenocysteinyl-tRNA(Sec) biosynthesis; L-seryl-tRNA(Sec) from L-serine and tRNA(Sec): step 1/1. In terms of biological role, catalyzes the attachment of serine to tRNA(Ser). Is also able to aminoacylate tRNA(Sec) with serine, to form the misacylated tRNA L-seryl-tRNA(Sec), which will be further converted into selenocysteinyl-tRNA(Sec). The chain is Serine--tRNA ligase from Pseudothermotoga lettingae (strain ATCC BAA-301 / DSM 14385 / NBRC 107922 / TMO) (Thermotoga lettingae).